The following is a 201-amino-acid chain: Putative 3-methyladenine DNA glycosylase (201 aa).

Belongs to the DNA glycosylase MPG family.

In Rhodopseudomonas palustris (strain HaA2), this protein is Putative 3-methyladenine DNA glycosylase.